Reading from the N-terminus, the 173-residue chain is Shikimate kinase 1 (173 aa).

Position 14 to 19 (14 to 19 (GAGKST)) interacts with ATP. Ser-18 serves as a coordination point for Mg(2+). The substrate site is built by Asp-36, Arg-60, and Gly-82. Position 120 (Arg-120) interacts with ATP. Arg-140 is a binding site for substrate. Gln-157 serves as a coordination point for ATP.

It belongs to the shikimate kinase family. As to quaternary structure, monomer. It depends on Mg(2+) as a cofactor.

Its subcellular location is the cytoplasm. It catalyses the reaction shikimate + ATP = 3-phosphoshikimate + ADP + H(+). The protein operates within metabolic intermediate biosynthesis; chorismate biosynthesis; chorismate from D-erythrose 4-phosphate and phosphoenolpyruvate: step 5/7. Its function is as follows. Catalyzes the specific phosphorylation of the 3-hydroxyl group of shikimic acid using ATP as a cosubstrate. The protein is Shikimate kinase 1 of Pectobacterium atrosepticum (strain SCRI 1043 / ATCC BAA-672) (Erwinia carotovora subsp. atroseptica).